Consider the following 611-residue polypeptide: Brain-enriched guanylate kinase-associated protein (611 aa).

A Phosphotyrosine modification is found at Y156. 3 positions are modified to phosphoserine: S219, S248, and S265. T268 is subject to Phosphothreonine. Residues S284, S364, and S391 each carry the phosphoserine modification. R399 carries the post-translational modification Asymmetric dimethylarginine. A phosphoserine mark is found at S474, S484, S494, S496, S519, S521, and S525. Residues 520 to 611 (LSPSRSADPL…KAQLYGTLLN (92 aa)) are disordered. The span at 554–563 (EPEHGSRDSL) shows a compositional bias: basic and acidic residues. Phosphoserine occurs at positions 571 and 581.

Interacts with DLG4 and DLGAP1 and forms a ternary complex. Brain-specific. Expressed in neurons and rather enriched at synaptic junctions.

Its subcellular location is the cytoplasm. It localises to the membrane. In terms of biological role, may sustain the structure of the postsynaptic density (PSD). This Rattus norvegicus (Rat) protein is Brain-enriched guanylate kinase-associated protein (Begain).